The primary structure comprises 457 residues: Nuclear hormone receptor family member nhr-20 (457 aa).

Positions 16-92 (TSKCLVCEHP…AGMRRECVQK (77 aa)) form a DNA-binding region, nuclear receptor. 2 consecutive NR C4-type zinc fingers follow at residues 19-40 (CLVC…CLAC) and 56-80 (CKKD…FDKC). The segment at 125–182 (GDQTDDNSPLSIEKKSPPGLLPNDSPMMADFKFDPSDIPSTSGGSTQRLERSPSPKLA) is disordered. Residues 162–171 (IPSTSGGSTQ) are compositionally biased toward polar residues. The region spanning 201–457 (QLKNSMDRRR…DALSKSLLTL (257 aa)) is the NR LBD domain.

The protein belongs to the nuclear hormone receptor family.

Its subcellular location is the nucleus. Functionally, orphan nuclear receptor. In Caenorhabditis elegans, this protein is Nuclear hormone receptor family member nhr-20 (nhr-20).